Consider the following 80-residue polypeptide: UPF0154 protein SaurJH1_1431 (80 aa).

Residues 4 to 24 traverse the membrane as a helical segment; it reads WLAIIFIVAALILGLIGGFLL.

It belongs to the UPF0154 family.

The protein resides in the cell membrane. This Staphylococcus aureus (strain JH1) protein is UPF0154 protein SaurJH1_1431.